The sequence spans 385 residues: Centrosomal protein of 44 kDa (385 aa).

Positions 11–192 (RNLEQVLRSL…GANIPEDTVT (182 aa)) are binds with microtubules and centrioles. Residues 126–154 (LEKTPSQQRKKTSSAKSEPCSSTEKTSTE) are disordered. Residues 139-154 (SAKSEPCSSTEKTSTE) are compositionally biased toward polar residues. The stretch at 230–271 (EVTALQSMLAECQEKLKKLTCIESRLESLEEKMKGKVLVNEK) forms a coiled coil. The tract at residues 303 to 348 (SEDYSSSSDMDSLNPDRKSKEERHANIPLSSGYSTVSSDSTPRTST) is disordered. Residues 305-314 (DYSSSSDMDS) are compositionally biased toward low complexity. Positions 316-327 (NPDRKSKEERHA) are enriched in basic and acidic residues. Residues 332–342 (SSGYSTVSSDS) show a composition bias toward low complexity. A Phosphoserine modification is found at Ser342. Thr343 carries the post-translational modification Phosphothreonine. Residues 358–381 (SEETTMQKMERMKKMFEETAELLK) are a coiled coil.

As to quaternary structure, interacts with CROCC. Interacts with POC1B; the interaction is direct and recruits POC1B to centriolar microtubules. Binds to centriolar microtubules.

It localises to the cytoplasm. It is found in the cytoskeleton. The protein localises to the microtubule organizing center. The protein resides in the centrosome. Its subcellular location is the centriole. It localises to the spindle pole. It is found in the midbody. Centriole-enriched microtubule-binding protein involved in centriole biogenesis. In collaboration with CEP295 and POC1B, is required for the centriole-to-centrosome conversion by ensuring the formation of bona fide centriole wall. Functions as a linker component that maintains centrosome cohesion. Associates with CROCC and regulates its stability and localization to the centrosome. The chain is Centrosomal protein of 44 kDa (CEP44) from Bos taurus (Bovine).